The chain runs to 245 residues: NAD-dependent protein deacetylase (245 aa).

The region spanning 1–245 (MLLLDKINEL…SIGKVLETVI (245 aa)) is the Deacetylase sirtuin-type domain. Residues Ala26, Thr30, Phe37, Arg38, Gln107, Ile109, Asp110, and His125 each coordinate NAD(+). Phe37 serves as a coordination point for nicotinamide. Nicotinamide is bound by residues Ile109 and Asp110. The Proton acceptor role is filled by His125. Cys133, Cys136, Cys155, and Cys158 together coordinate Zn(2+). NAD(+) is bound by residues Thr196, Ser197, Asn219, and Ile237.

It belongs to the sirtuin family. Class U subfamily. It depends on Zn(2+) as a cofactor.

It is found in the cytoplasm. It catalyses the reaction N(6)-acetyl-L-lysyl-[protein] + NAD(+) + H2O = 2''-O-acetyl-ADP-D-ribose + nicotinamide + L-lysyl-[protein]. Functionally, NAD-dependent protein deacetylase which modulates the activities of several enzymes which are inactive in their acetylated form. This is NAD-dependent protein deacetylase from Clostridium acetobutylicum (strain ATCC 824 / DSM 792 / JCM 1419 / IAM 19013 / LMG 5710 / NBRC 13948 / NRRL B-527 / VKM B-1787 / 2291 / W).